A 185-amino-acid chain; its full sequence is Protein GrpE (185 aa).

The segment at 1–44 (MSEEELTNGPGPEPQPEPLEVESAPLEAAPAGEPDKALLEAQQQ) is disordered.

Belongs to the GrpE family. In terms of assembly, homodimer.

The protein localises to the cytoplasm. Its function is as follows. Participates actively in the response to hyperosmotic and heat shock by preventing the aggregation of stress-denatured proteins, in association with DnaK and GrpE. It is the nucleotide exchange factor for DnaK and may function as a thermosensor. Unfolded proteins bind initially to DnaJ; upon interaction with the DnaJ-bound protein, DnaK hydrolyzes its bound ATP, resulting in the formation of a stable complex. GrpE releases ADP from DnaK; ATP binding to DnaK triggers the release of the substrate protein, thus completing the reaction cycle. Several rounds of ATP-dependent interactions between DnaJ, DnaK and GrpE are required for fully efficient folding. The protein is Protein GrpE of Methylococcus capsulatus (strain ATCC 33009 / NCIMB 11132 / Bath).